The chain runs to 638 residues: Probable glycerol-3-phosphate dehydrogenase, mitochondrial (638 aa).

Position 100 to 128 (100 to 128 (DLIVIGGGATGTGVALDAQSRGMKVALFE)) interacts with FAD.

This sequence belongs to the FAD-dependent glycerol-3-phosphate dehydrogenase family. Requires FAD as cofactor.

The protein resides in the mitochondrion. It catalyses the reaction a quinone + sn-glycerol 3-phosphate = dihydroxyacetone phosphate + a quinol. Its pathway is polyol metabolism; glycerol degradation via glycerol kinase pathway; glycerone phosphate from sn-glycerol 3-phosphate (anaerobic route): step 1/1. The sequence is that of Probable glycerol-3-phosphate dehydrogenase, mitochondrial from Dictyostelium discoideum (Social amoeba).